The primary structure comprises 250 residues: UPF0259 membrane protein SG1383 (250 aa).

A run of 6 helical transmembrane segments spans residues 20–40 (FASI…LGHA), 86–106 (AGTL…LTMI), 121–141 (IGLS…TTLL), 146–166 (LLLI…APVI), 191–211 (LLAP…LLAT), and 219–239 (LVAV…LLIY).

This sequence belongs to the UPF0259 family.

The protein localises to the cell inner membrane. In Sodalis glossinidius (strain morsitans), this protein is UPF0259 membrane protein SG1383.